Consider the following 24-residue polypeptide: Conotoxin PIVE (24 aa).

3 cysteine pairs are disulfide-bonded: cysteine 2–cysteine 10, cysteine 3–cysteine 15, and cysteine 13–cysteine 19. Position 24 is a lysine amide (lysine 24).

This sequence belongs to the conotoxin A superfamily. As to expression, expressed by the venom duct.

It localises to the secreted. In terms of biological role, probable neurotoxin with ion channel inhibitor activity. In vivo, elicits dose-dependently excitatory activity upon injection into fish. Its action is slowly reversible. The chain is Conotoxin PIVE from Conus purpurascens (Purple cone).